A 197-amino-acid chain; its full sequence is RNA pyrophosphohydrolase (197 aa).

Residues 6-154 (GYRPNVGIVL…KREVYQLALS (149 aa)) form the Nudix hydrolase domain. The short motif at 38–59 (GGIQHGESPEQAMYRELHEEVG) is the Nudix box element.

The protein belongs to the Nudix hydrolase family. RppH subfamily. The cofactor is a divalent metal cation.

Its function is as follows. Accelerates the degradation of transcripts by removing pyrophosphate from the 5'-end of triphosphorylated RNA, leading to a more labile monophosphorylated state that can stimulate subsequent ribonuclease cleavage. In Polynucleobacter necessarius subsp. necessarius (strain STIR1), this protein is RNA pyrophosphohydrolase.